The chain runs to 345 residues: Pyruvate dehydrogenase E1 component subunit alpha (345 aa).

In terms of assembly, heterodimer of an alpha and a beta chain. Thiamine diphosphate serves as cofactor.

It carries out the reaction N(6)-[(R)-lipoyl]-L-lysyl-[protein] + pyruvate + H(+) = N(6)-[(R)-S(8)-acetyldihydrolipoyl]-L-lysyl-[protein] + CO2. Functionally, the pyruvate dehydrogenase complex catalyzes the overall conversion of pyruvate to acetyl-CoA and CO(2). It contains multiple copies of three enzymatic components: pyruvate dehydrogenase (E1), dihydrolipoamide acetyltransferase (E2) and lipoamide dehydrogenase (E3). The polypeptide is Pyruvate dehydrogenase E1 component subunit alpha (pdhA) (Acholeplasma laidlawii).